The following is a 73-amino-acid chain: Defensin-like protein 87 (73 aa).

The signal sequence occupies residues 1 to 27 (MTTKKTSSVVLPLLLVFALILMPMVAG). Disulfide bonds link C33–C71, C45–C69, and C49–C70.

Belongs to the DEFL family.

The protein localises to the secreted. The chain is Defensin-like protein 87 from Arabidopsis thaliana (Mouse-ear cress).